We begin with the raw amino-acid sequence, 289 residues long: Bidirectional sugar transporter SWEET11 (289 aa).

Over 1–9 the chain is Extracellular; it reads MSLFNTENT. Residues 10–30 form a helical membrane-spanning segment; it reads WAFVFGLLGNLISFAVFLSPV. One can recognise a MtN3/slv 1 domain in the interval 12–98; that stretch reads FVFGLLGNLI…SMFLAYAPKP (87 aa). The Cytoplasmic portion of the chain corresponds to 31–43; that stretch reads PTFYRIWKKKTTE. A helical membrane pass occupies residues 44 to 64; it reads GFQSIPYVVALFSATLWLYYA. Residues 65–70 are Extracellular-facing; it reads TQKKDV. Residues 71 to 91 traverse the membrane as a helical segment; that stretch reads FLLVTINAFGCFIETIYISMF. At 92-105 the chain is on the cytoplasmic side; sequence LAYAPKPARMLTVK. Residues 106–126 traverse the membrane as a helical segment; the sequence is MLLLMNFGGFCAILLLCQFLV. Residues 127–133 are Extracellular-facing; it reads KGATRAK. The helical transmembrane segment at 134–154 threads the bilayer; it reads IIGGICVGFSVCVFAAPLSII. One can recognise a MtN3/slv 2 domain in the interval 134 to 218; that stretch reads IIGGICVGFS…ILYVVYKYCK (85 aa). At 155–167 the chain is on the cytoplasmic side; that stretch reads RTVIKTRSVEYMP. The helical transmembrane segment at 168–188 threads the bilayer; sequence FSLSLTLTISAVIWLLYGLAL. The Extracellular segment spans residues 189–192; it reads KDIY. A helical transmembrane segment spans residues 193–213; it reads VAFPNVLGFALGALQMILYVV. Over 214 to 289 the chain is Cytoplasmic; it reads YKYCKTSPHL…GKQSSSAAAT (76 aa). A disordered region spans residues 266 to 289; that stretch reads DRRAEIEDGQTPKHGKQSSSAAAT. Threonine 276 is subject to Phosphothreonine.

This sequence belongs to the SWEET sugar transporter family. Forms homooligomers and heterooligomers with SWEET1, SWEET3, SWEET5, SWEET6, SWEET7, SWEET8, SWEET9, SWEET12, SWEET13, SWEET15 and SWEET17. In terms of tissue distribution, expressed in leaves, especially in phloem. Expressed in developing seeds.

Its subcellular location is the cell membrane. Its function is as follows. Mediates both low-affinity uptake and efflux of sugar across the plasma membrane. Involved in phloem loading by mediating export from parenchyma cells feeding H(+)-coupled import into the sieve element/companion cell complex, thus contributing to the sucrose migration from sites of synthesis in the mesophyll to the phloem. Contributes to seed filling by triggering sucrose efflux involved in the transfer of sugars from seed coat to embryos. This is Bidirectional sugar transporter SWEET11 from Arabidopsis thaliana (Mouse-ear cress).